A 352-amino-acid chain; its full sequence is 4-hydroxybenzaldehyde synthase, chloroplastic (352 aa).

Residue Asn-122 is glycosylated (N-linked (GlcNAc...) asparagine). 2 disulfides stabilise this stretch: Cys-159–Cys-199 and Cys-190–Cys-231. The N-linked (GlcNAc...) asparagine glycan is linked to Asn-247. Cys-289 and Cys-339 are disulfide-bonded. Residues His-298 and Asn-318 contribute to the active site.

The protein belongs to the peptidase C1 family. As to quaternary structure, forms homodimers, homotrimers and homotetramers. In terms of tissue distribution, mainly expressed in pods, but also present in stems, roots, leaves and embryos (at protein level).

It localises to the plastid. The protein resides in the chloroplast. It carries out the reaction (E)-4-coumarate + H2O = 4-hydroxybenzaldehyde + acetate. It participates in aromatic compound metabolism; phenylpropanoid biosynthesis. Inhibited by ascorbate. In terms of biological role, involved in the biosynthesis of vanillin (4-hydroxy-3-methoxy-benzaldehyde) and derivative natural products, key components of vanilla pods flavor. Catalyzes the conversion of (E)-4-coumarate to 4-hydroxybenzaldehyde, a vanillin precursor. Mediates the conversion of ferulic acid to 3-methoxy-4-hydroxybenzaldehyde with a very low efficiency. Cannot use cinnamic, caffeic, sinapic and o-coumaric acids as substrates. This Vanilla planifolia (Vanilla) protein is 4-hydroxybenzaldehyde synthase, chloroplastic.